Here is a 368-residue protein sequence, read N- to C-terminus: Probable dual-specificity RNA methyltransferase RlmN (368 aa).

The active-site Proton acceptor is the Glu108. Residues 114–345 (HAYGNSVCVS…VTVRRGLGAD (232 aa)) form the Radical SAM core domain. Cysteines 121 and 350 form a disulfide. 3 residues coordinate [4Fe-4S] cluster: Cys128, Cys132, and Cys135. Residues 175–176 (GE), Ser207, 230–232 (SLH), and Asn307 contribute to the S-adenosyl-L-methionine site. Residue Cys350 is the S-methylcysteine intermediate of the active site.

Belongs to the radical SAM superfamily. RlmN family. The cofactor is [4Fe-4S] cluster.

It localises to the cytoplasm. It carries out the reaction adenosine(2503) in 23S rRNA + 2 reduced [2Fe-2S]-[ferredoxin] + 2 S-adenosyl-L-methionine = 2-methyladenosine(2503) in 23S rRNA + 5'-deoxyadenosine + L-methionine + 2 oxidized [2Fe-2S]-[ferredoxin] + S-adenosyl-L-homocysteine. The enzyme catalyses adenosine(37) in tRNA + 2 reduced [2Fe-2S]-[ferredoxin] + 2 S-adenosyl-L-methionine = 2-methyladenosine(37) in tRNA + 5'-deoxyadenosine + L-methionine + 2 oxidized [2Fe-2S]-[ferredoxin] + S-adenosyl-L-homocysteine. In terms of biological role, specifically methylates position 2 of adenine 2503 in 23S rRNA and position 2 of adenine 37 in tRNAs. The chain is Probable dual-specificity RNA methyltransferase RlmN from Pelotomaculum thermopropionicum (strain DSM 13744 / JCM 10971 / SI).